Reading from the N-terminus, the 668-residue chain is Hemocyanin subunit D (668 aa).

The signal sequence occupies residues 1-22 (MDTRVLRLTLALVALSGVLADS). Cu cation contacts are provided by His-206, His-210, and His-236. N-linked (GlcNAc...) asparagine glycosylation is present at Asn-322. Residues His-357, His-361, and His-397 each coordinate Cu cation. A disulfide bridge links Cys-567 with Cys-614.

This sequence belongs to the tyrosinase family. Hemocyanin subfamily. 36-chain polymer consisting of 6 hexamers, each of which includes 4 different chains, A, B, C and D. In terms of tissue distribution, hemolymph.

It is found in the secreted. The protein localises to the extracellular space. Hemocyanins are copper-containing oxygen carriers occurring freely dissolved in the hemolymph of many mollusks and arthropods. In Scutigera coleoptrata (House centipede), this protein is Hemocyanin subunit D (HCD).